Reading from the N-terminus, the 183-residue chain is uncharacterized protein (183 aa).

The region spanning 1–182 (MFRVVHGDIT…VALKVLERDE (182 aa)) is the Macro domain.

This is an uncharacterized protein from Pyrococcus abyssi (strain GE5 / Orsay).